We begin with the raw amino-acid sequence, 546 residues long: Sodium/hydrogen exchanger 2 (546 aa).

The Cytoplasmic segment spans residues 1-21 (MTMFASLTSKMLSVSTSDHAS). The chain crosses the membrane as a helical span at residues 22–42 (VVSLNLFVALLCACIVIGHLL). Over 43 to 47 (EENRW) the chain is Vacuolar. The helical transmembrane segment at 48–68 (MNESITALLIGLGTGVVILLI) threads the bilayer. Topologically, residues 69-75 (SRGKNSH) are cytoplasmic. The helical intramembrane region spans 76 to 96 (LLVFSEDLFFIYLLPPIIFNA). The Cytoplasmic segment spans residues 97 to 111 (GFQVKKKQFFRNFVT). The helical transmembrane segment at 112-132 (IMAFGAIGTVVSCTIISLGAI) threads the bilayer. Residues 133–148 (QFFKKLDIGTFDLGDF) lie on the Vacuolar side of the membrane. Intramembrane regions (helical) lie at residues 149–168 (LAIG…QVLN) and 174–194 (LLYS…VVLF). At 195 to 218 (NAIQSFDLTHLNHEAAFQFLGNFF) the chain is on the vacuolar side. The chain crosses the membrane as a helical span at residues 219-239 (YLFLLSTGLGVATGLISAYVI). At 240 to 264 (KKLYFGRHSTDREVALMMLMAYLSY) the chain is on the cytoplasmic side. The chain crosses the membrane as a helical span at residues 265-285 (MLAELFALSGILTVFFCGIVM). Residues 286–304 (SHYTWHNVTESSRITTKHA) are Vacuolar-facing. N292 carries N-linked (GlcNAc...) asparagine glycosylation. Residues 305-325 (FATLSFLAETFIFLYVGMDAL) traverse the membrane as a helical segment. Residues 326–344 (DIEKWRFVSDSPGTSVAVS) lie on the Cytoplasmic side of the membrane. Residues 345–365 (SILMGLVMLGRAAFVFPLSFL) form a helical membrane-spanning segment. The Vacuolar portion of the chain corresponds to 366 to 381 (SNLAKKHQSEKISIKQ). Residues 382-402 (QVVIWWAGLMRGAVSMALAYN) traverse the membrane as a helical segment. Residues 403–415 (KFTRSGHTELRGN) are Cytoplasmic-facing. A helical membrane pass occupies residues 416-436 (AIMITSTITVCLFSTMVFGML). Over 437–546 (TKPLIRYLMP…ERSSHDLSKP (110 aa)) the chain is Vacuolar.

It belongs to the monovalent cation:proton antiporter 1 (CPA1) transporter (TC 2.A.36) family. As to expression, expressed in roots and shoots.

The protein resides in the vacuole membrane. The catalysed reaction is Na(+)(in) + H(+)(out) = Na(+)(out) + H(+)(in). It carries out the reaction K(+)(in) + H(+)(out) = K(+)(out) + H(+)(in). Its function is as follows. Acts in low affinity electroneutral exchange of protons for cations such as Na(+) or K(+) across membranes. May also exchange Li(+) and Cs(+) with a lower affinity. Involved in vacuolar ion compartmentalization necessary for cell volume regulation and cytoplasmic Na(+) detoxification. This Arabidopsis thaliana (Mouse-ear cress) protein is Sodium/hydrogen exchanger 2 (NHX2).